Reading from the N-terminus, the 493-residue chain is Glutamyl-tRNA(Gln) amidotransferase subunit A (493 aa).

Active-site charge relay system residues include K78 and S158. S182 serves as the catalytic Acyl-ester intermediate.

The protein belongs to the amidase family. GatA subfamily. In terms of assembly, heterotrimer of A, B and C subunits.

The enzyme catalyses L-glutamyl-tRNA(Gln) + L-glutamine + ATP + H2O = L-glutaminyl-tRNA(Gln) + L-glutamate + ADP + phosphate + H(+). Allows the formation of correctly charged Gln-tRNA(Gln) through the transamidation of misacylated Glu-tRNA(Gln) in organisms which lack glutaminyl-tRNA synthetase. The reaction takes place in the presence of glutamine and ATP through an activated gamma-phospho-Glu-tRNA(Gln). The chain is Glutamyl-tRNA(Gln) amidotransferase subunit A from Methylorubrum populi (strain ATCC BAA-705 / NCIMB 13946 / BJ001) (Methylobacterium populi).